Consider the following 399-residue polypeptide: MEKRLFTSESVSEGHPDKVADQISDAILDAMLKKDPNSHVACETIVTTGMVFVFGEISTSAYVDIQDVVRKTILKIGYDRPELGFDGNNCAVMVDIDEQSPDIADGVDHSLETRENKSDNDELDQIGAGDQGLMFGFAIKETPELMPLPISLSHRLMRRVASLRKDHTLEWLRPDAKAQVTVEYDENGKPLCVDTVVISTQTDAEVSNEEICRAMIDLVIKEVIPAKYLDENTKFLINPSGRFVIGGPKGDSGLTGRKIIVDTYGGYARHGGGAFSGKDPTKVDRSASYAARYVAKNIVAAGLAYRCEVQLAYAIGVAHPVSIMIDTAGTGTVDDELLTEAVRNVFDLRPAGIIKMLDLRRPIYEQTAAYGHFGRTDVDLPWEKTDKTQALLDYIKNNQ.

H15 contacts ATP. A Mg(2+)-binding site is contributed by D17. E43 lines the K(+) pocket. 2 residues coordinate L-methionine: E56 and Q99. The flexible loop stretch occupies residues 99 to 109 (QSPDIADGVDH). ATP-binding positions include 175–177 (DAK), 242–243 (RF), D251, 257–258 (RK), A274, and K278. D251 is a binding site for L-methionine. Residue K282 participates in L-methionine binding.

This sequence belongs to the AdoMet synthase family. In terms of assembly, homotetramer; dimer of dimers. The cofactor is Mg(2+). K(+) serves as cofactor.

It localises to the cytoplasm. It catalyses the reaction L-methionine + ATP + H2O = S-adenosyl-L-methionine + phosphate + diphosphate. It functions in the pathway amino-acid biosynthesis; S-adenosyl-L-methionine biosynthesis; S-adenosyl-L-methionine from L-methionine: step 1/1. In terms of biological role, catalyzes the formation of S-adenosylmethionine (AdoMet) from methionine and ATP. The overall synthetic reaction is composed of two sequential steps, AdoMet formation and the subsequent tripolyphosphate hydrolysis which occurs prior to release of AdoMet from the enzyme. The protein is S-adenosylmethionine synthase of Lactobacillus acidophilus (strain ATCC 700396 / NCK56 / N2 / NCFM).